Here is a 450-residue protein sequence, read N- to C-terminus: Protein tweety homolog 1 (450 aa).

Topologically, residues 1–43 are extracellular; that stretch reads MGAPPGYRPSAWVHLLHQLPRADFQLRPVPSGFAPRDQEYQQA. Residues 44–64 form a helical membrane-spanning segment; that stretch reads LLLVAALAGLGLGLSLIFIAV. At 65-88 the chain is on the cytoplasmic side; that stretch reads YLIRFCCCRPPEPHGAKSPPPGGG. The helical transmembrane segment at 89 to 109 threads the bilayer; the sequence is CVTWSCIAALLVGCAGIGIGF. Residues 110–214 are Extracellular-facing; the sequence is YGNSETSDGV…DVTFVEEYRW (105 aa). Residue Asn130 is glycosylated (N-linked (GlcNAc...) asparagine). The chain crosses the membrane as a helical span at residues 215 to 235; that stretch reads LAYVLLLLLVLLVCLFTLLGL. Residues 236–240 are Cytoplasmic-facing; sequence AKQSK. The helical transmembrane segment at 241–261 threads the bilayer; sequence WLVVVMTAMSLLVLVLSWGSM. Residues 262–390 lie on the Extracellular side of the membrane; it reads GLEAATAVGL…LRGLCEDALE (129 aa). Cystine bridges form between Cys275/Cys385 and Cys303/Cys370. N-linked (GlcNAc...) asparagine glycosylation is found at Asn284 and Asn355. Residues 391 to 411 traverse the membrane as a helical segment; the sequence is GLLFLMLFSLLSAGALATTLC. Over 412–450 the chain is Cytoplasmic; that stretch reads SLPRAWALFPPSDDYDDTDDDDPFNPQESKRFVQWQSSI. Residues 428 to 450 form a disordered region; the sequence is DTDDDDPFNPQESKRFVQWQSSI. Ser440 carries the phosphoserine modification.

The protein belongs to the tweety family. As to quaternary structure, homotetramer; disulfide-linked. Homodimer. Post-translationally, N-glycosylated. Contains high-mannose, hybrid and complex oligosaccharides. Expressed in the astrocytes (at protein level). Restricted mainly to neural tissues. Strongly expressed in brain and eye.

The protein localises to the cell membrane. It catalyses the reaction chloride(in) = chloride(out). The enzyme catalyses L-glutamate(out) = L-glutamate(in). Its activity is regulated as follows. Inhibited by (4-[(2-butyl-6,7-dichloro-2- cyclopentyl-2,3-dihydro-1-oxo-1H-inden-5-yl)oxy]butanoic acid). Its function is as follows. Calcium-independent, swelling-dependent volume-regulated anion channel (VRAC-swell) which plays a pivotal role in the process of regulatory volume decrease (RVD) in the brain through the efflux of anions like chloride and organic osmolytes like glutamate. In Mus musculus (Mouse), this protein is Protein tweety homolog 1 (Ttyh1).